The following is a 229-amino-acid chain: Ribose-5-phosphate isomerase A (229 aa).

Substrate contacts are provided by residues 28–31 (TGST), 85–88 (DGAD), and 98–101 (KGRG). The active-site Proton acceptor is the Glu-107. Position 125 (Lys-125) interacts with substrate.

This sequence belongs to the ribose 5-phosphate isomerase family. In terms of assembly, homodimer.

The catalysed reaction is aldehydo-D-ribose 5-phosphate = D-ribulose 5-phosphate. It participates in carbohydrate degradation; pentose phosphate pathway; D-ribose 5-phosphate from D-ribulose 5-phosphate (non-oxidative stage): step 1/1. In terms of biological role, catalyzes the reversible conversion of ribose-5-phosphate to ribulose 5-phosphate. The sequence is that of Ribose-5-phosphate isomerase A from Pyrococcus furiosus (strain ATCC 43587 / DSM 3638 / JCM 8422 / Vc1).